We begin with the raw amino-acid sequence, 426 residues long: 3-phosphoshikimate 1-carboxyvinyltransferase (426 aa).

3-phosphoshikimate-binding residues include Lys-20, Ser-21, and Arg-25. A phosphoenolpyruvate-binding site is contributed by Lys-20. Phosphoenolpyruvate is bound by residues Gly-92 and Arg-120. 3-phosphoshikimate contacts are provided by Ser-166, Gln-168, Asp-312, and Lys-339. Phosphoenolpyruvate is bound at residue Gln-168. The active-site Proton acceptor is Asp-312. Arg-385 provides a ligand contact to phosphoenolpyruvate.

Belongs to the EPSP synthase family. Monomer.

It is found in the cytoplasm. The catalysed reaction is 3-phosphoshikimate + phosphoenolpyruvate = 5-O-(1-carboxyvinyl)-3-phosphoshikimate + phosphate. It participates in metabolic intermediate biosynthesis; chorismate biosynthesis; chorismate from D-erythrose 4-phosphate and phosphoenolpyruvate: step 6/7. In terms of biological role, catalyzes the transfer of the enolpyruvyl moiety of phosphoenolpyruvate (PEP) to the 5-hydroxyl of shikimate-3-phosphate (S3P) to produce enolpyruvyl shikimate-3-phosphate and inorganic phosphate. This chain is 3-phosphoshikimate 1-carboxyvinyltransferase, found in Streptococcus suis (strain 98HAH33).